The chain runs to 454 residues: Probable DNA primase large subunit (454 aa).

Positions 280, 359, 375, and 415 each coordinate [4Fe-4S] cluster.

The protein belongs to the eukaryotic-type primase large subunit family. Heterodimer of a small subunit and a large subunit. [4Fe-4S] cluster is required as a cofactor.

Functionally, DNA primase is the polymerase that synthesizes small RNA primers for the Okazaki fragments made during discontinuous DNA replication. This Arabidopsis thaliana (Mouse-ear cress) protein is Probable DNA primase large subunit.